Here is a 729-residue protein sequence, read N- to C-terminus: Dipeptidyl peptidase 3 (729 aa).

A Zn(2+)-binding site is contributed by His459. Residue Glu460 is part of the active site. Residues His464 and Glu517 each contribute to the Zn(2+) site.

This sequence belongs to the peptidase M49 family. Zn(2+) serves as cofactor.

Its subcellular location is the cytoplasm. It catalyses the reaction Release of an N-terminal dipeptide from a peptide comprising four or more residues, with broad specificity. Also acts on dipeptidyl 2-naphthylamides.. The polypeptide is Dipeptidyl peptidase 3 (dpp3) (Nematostella vectensis (Starlet sea anemone)).